A 264-amino-acid chain; its full sequence is Thymidylate synthase (264 aa).

Position 21 (Arg21) interacts with dUMP. Position 51 (His51) interacts with (6R)-5,10-methylene-5,6,7,8-tetrahydrofolate. Position 126-127 (126-127) interacts with dUMP; it reads RR. The active-site Nucleophile is Cys146. Residues 166–169, Asn177, and 207–209 each bind dUMP; these read RSAD and HLY. (6R)-5,10-methylene-5,6,7,8-tetrahydrofolate is bound at residue Asp169. Ala263 contributes to the (6R)-5,10-methylene-5,6,7,8-tetrahydrofolate binding site.

This sequence belongs to the thymidylate synthase family. Bacterial-type ThyA subfamily. In terms of assembly, homodimer.

The protein localises to the cytoplasm. The enzyme catalyses dUMP + (6R)-5,10-methylene-5,6,7,8-tetrahydrofolate = 7,8-dihydrofolate + dTMP. Its pathway is pyrimidine metabolism; dTTP biosynthesis. Its function is as follows. Catalyzes the reductive methylation of 2'-deoxyuridine-5'-monophosphate (dUMP) to 2'-deoxythymidine-5'-monophosphate (dTMP) while utilizing 5,10-methylenetetrahydrofolate (mTHF) as the methyl donor and reductant in the reaction, yielding dihydrofolate (DHF) as a by-product. This enzymatic reaction provides an intracellular de novo source of dTMP, an essential precursor for DNA biosynthesis. This chain is Thymidylate synthase, found in Azotobacter vinelandii (strain DJ / ATCC BAA-1303).